The primary structure comprises 346 residues: tRNA N6-adenosine threonylcarbamoyltransferase (346 aa).

The Fe cation site is built by His-110 and His-114. Substrate contacts are provided by residues 132 to 136 (LLSGG), Asp-165, Gly-178, and Asn-274. Asp-298 lines the Fe cation pocket.

This sequence belongs to the KAE1 / TsaD family. Fe(2+) serves as cofactor.

The protein localises to the cytoplasm. It carries out the reaction L-threonylcarbamoyladenylate + adenosine(37) in tRNA = N(6)-L-threonylcarbamoyladenosine(37) in tRNA + AMP + H(+). Required for the formation of a threonylcarbamoyl group on adenosine at position 37 (t(6)A37) in tRNAs that read codons beginning with adenine. Is involved in the transfer of the threonylcarbamoyl moiety of threonylcarbamoyl-AMP (TC-AMP) to the N6 group of A37, together with TsaE and TsaB. TsaD likely plays a direct catalytic role in this reaction. The sequence is that of tRNA N6-adenosine threonylcarbamoyltransferase from Borreliella burgdorferi (strain ATCC 35210 / DSM 4680 / CIP 102532 / B31) (Borrelia burgdorferi).